A 257-amino-acid chain; its full sequence is Ciliary microtubule associated protein 1B (257 aa).

STPGR repeat units follow at residues 103 to 129, 182 to 207, and 218 to 243; these read PGPG…LSAR, PGPG…MTGR, and PGPG…FGIR.

It belongs to the CIMAP family.

It is found in the cell projection. It localises to the cilium. Its subcellular location is the flagellum. In Danio rerio (Zebrafish), this protein is Ciliary microtubule associated protein 1B (cimap1b).